Reading from the N-terminus, the 246-residue chain is E3 ubiquitin-protein ligase MARCHF2 (246 aa).

The RING-CH-type zinc finger occupies 56–116; that stretch reads GTQSDGPICR…ELCHTEFAVE (61 aa). Positions 64, 67, 80, 82, 90, 93, 106, and 109 each coordinate Zn(2+). The next 2 helical transmembrane spans lie at 138-158 and 175-195; these read LFCD…SGWL and AVGL…WTLV.

It is found in the endoplasmic reticulum membrane. The protein localises to the lysosome membrane. Its subcellular location is the endosome membrane. The enzyme catalyses S-ubiquitinyl-[E2 ubiquitin-conjugating enzyme]-L-cysteine + [acceptor protein]-L-lysine = [E2 ubiquitin-conjugating enzyme]-L-cysteine + N(6)-ubiquitinyl-[acceptor protein]-L-lysine.. Its pathway is protein modification; protein ubiquitination. Functionally, E3 ubiquitin-protein ligase which may be involved in endosomal trafficking. E3 ubiquitin ligases accept ubiquitin from an E2 ubiquitin-conjugating enzyme in the form of a thioester and then directly transfer the ubiquitin to targeted substrates. The sequence is that of E3 ubiquitin-protein ligase MARCHF2 (marchf2) from Xenopus laevis (African clawed frog).